A 350-amino-acid polypeptide reads, in one-letter code: DNA-directed RNA polymerase subunit alpha (350 aa).

The interval 1–226 is alpha N-terminal domain (alpha-NTD); sequence MLISQRPTLS…ELFGLARELN (226 aa). The alpha C-terminal domain (alpha-CTD) stretch occupies residues 241 to 350; sequence ADQAAHFALP…NQDYAETEQL (110 aa). Residues 328–350 form a disordered region; that stretch reads GTWNSDAGYDLEDNQDYAETEQL. Over residues 336–350 the composition is skewed to acidic residues; it reads YDLEDNQDYAETEQL.

This sequence belongs to the RNA polymerase alpha chain family. As to quaternary structure, homodimer. The RNAP catalytic core consists of 2 alpha, 1 beta, 1 beta' and 1 omega subunit. When a sigma factor is associated with the core the holoenzyme is formed, which can initiate transcription.

The catalysed reaction is RNA(n) + a ribonucleoside 5'-triphosphate = RNA(n+1) + diphosphate. Its function is as follows. DNA-dependent RNA polymerase catalyzes the transcription of DNA into RNA using the four ribonucleoside triphosphates as substrates. The chain is DNA-directed RNA polymerase subunit alpha from Mycolicibacterium vanbaalenii (strain DSM 7251 / JCM 13017 / BCRC 16820 / KCTC 9966 / NRRL B-24157 / PYR-1) (Mycobacterium vanbaalenii).